Reading from the N-terminus, the 438-residue chain is Glutamyl-tRNA reductase (438 aa).

Residues 55–58 (TCNR), Ser118, 123–125 (ETQ), and Gln129 each bind substrate. The Nucleophile role is filled by Cys56. Residue 198–203 (GAGDMI) coordinates NADP(+).

It belongs to the glutamyl-tRNA reductase family. As to quaternary structure, homodimer.

It carries out the reaction (S)-4-amino-5-oxopentanoate + tRNA(Glu) + NADP(+) = L-glutamyl-tRNA(Glu) + NADPH + H(+). The protein operates within porphyrin-containing compound metabolism; protoporphyrin-IX biosynthesis; 5-aminolevulinate from L-glutamyl-tRNA(Glu): step 1/2. Functionally, catalyzes the NADPH-dependent reduction of glutamyl-tRNA(Glu) to glutamate 1-semialdehyde (GSA). The polypeptide is Glutamyl-tRNA reductase (Polynucleobacter asymbioticus (strain DSM 18221 / CIP 109841 / QLW-P1DMWA-1) (Polynucleobacter necessarius subsp. asymbioticus)).